The primary structure comprises 471 residues: Argininosuccinate lyase (471 aa).

The protein belongs to the lyase 1 family. Argininosuccinate lyase subfamily.

The protein resides in the cytoplasm. The enzyme catalyses 2-(N(omega)-L-arginino)succinate = fumarate + L-arginine. The protein operates within amino-acid biosynthesis; L-arginine biosynthesis; L-arginine from L-ornithine and carbamoyl phosphate: step 3/3. The protein is Argininosuccinate lyase of Acidiphilium cryptum (strain JF-5).